The sequence spans 230 residues: MKDVILRKIKNNLVVSCQAVGEETLNNDIAITLMAKACLEGGAKVLRLSQYSHIKSIKSISGKTPIIGLIKSNYENSEVIITPSIKEVDLLLSLNVDCIAIDATNRKRPSETLEVIFKYCREKSPNTLLMADCATIDDVKNADKLGFDLIGTTLRGYTKETFGKSNMDNDYSFIKECLSSIKTPLIAEGGIWEPYQVKDLLDLGCFAVVVGSAITRPKEITKYFLKALDN.

This sequence belongs to the NanE family.

It carries out the reaction an N-acyl-D-glucosamine 6-phosphate = an N-acyl-D-mannosamine 6-phosphate. Its pathway is amino-sugar metabolism; N-acetylneuraminate degradation; D-fructose 6-phosphate from N-acetylneuraminate: step 3/5. Converts N-acetylmannosamine-6-phosphate (ManNAc-6-P) to N-acetylglucosamine-6-phosphate (GlcNAc-6-P). The chain is Putative N-acetylmannosamine-6-phosphate 2-epimerase from Malacoplasma penetrans (strain HF-2) (Mycoplasma penetrans).